A 500-amino-acid polypeptide reads, in one-letter code: Galactose/methyl galactoside import ATP-binding protein MglA (500 aa).

2 ABC transporter domains span residues 8–243 (LEME…VGRD) and 257–500 (EMIL…AKYL). Residue 40–47 (GENGAGKS) participates in ATP binding.

This sequence belongs to the ABC transporter superfamily. Galactose/methyl galactoside importer (TC 3.A.1.2.3) family. In terms of assembly, the complex is composed of one ATP-binding protein (MglA), two transmembrane proteins (MglC) and a solute-binding protein (MglB).

It localises to the cell inner membrane. The catalysed reaction is D-galactose(out) + ATP + H2O = D-galactose(in) + ADP + phosphate + H(+). It catalyses the reaction methyl beta-D-galactoside(out) + ATP + H2O = methyl beta-D-galactoside(in) + ADP + phosphate + H(+). Part of the ABC transporter complex MglABC involved in galactose/methyl galactoside import. Responsible for energy coupling to the transport system. The sequence is that of Galactose/methyl galactoside import ATP-binding protein MglA from Fusobacterium nucleatum subsp. nucleatum (strain ATCC 25586 / DSM 15643 / BCRC 10681 / CIP 101130 / JCM 8532 / KCTC 2640 / LMG 13131 / VPI 4355).